The following is a 486-amino-acid chain: UDP-N-acetylmuramate--L-alanine ligase (486 aa).

129–135 provides a ligand contact to ATP; that stretch reads GTHGKTT.

It belongs to the MurCDEF family.

The protein localises to the cytoplasm. The enzyme catalyses UDP-N-acetyl-alpha-D-muramate + L-alanine + ATP = UDP-N-acetyl-alpha-D-muramoyl-L-alanine + ADP + phosphate + H(+). It participates in cell wall biogenesis; peptidoglycan biosynthesis. Cell wall formation. This chain is UDP-N-acetylmuramate--L-alanine ligase, found in Vibrio atlanticus (strain LGP32) (Vibrio splendidus (strain Mel32)).